A 559-amino-acid polypeptide reads, in one-letter code: Oxygen-dependent choline dehydrogenase (559 aa).

4–33 contributes to the FAD binding site; the sequence is DYIIIGAGSAGNVLATRLTEDSDVTVLLLE. The Proton acceptor role is filled by His-473.

The protein belongs to the GMC oxidoreductase family. FAD is required as a cofactor.

The enzyme catalyses choline + A = betaine aldehyde + AH2. It catalyses the reaction betaine aldehyde + NAD(+) + H2O = glycine betaine + NADH + 2 H(+). The protein operates within amine and polyamine biosynthesis; betaine biosynthesis via choline pathway; betaine aldehyde from choline (cytochrome c reductase route): step 1/1. Functionally, involved in the biosynthesis of the osmoprotectant glycine betaine. Catalyzes the oxidation of choline to betaine aldehyde and betaine aldehyde to glycine betaine at the same rate. The sequence is that of Oxygen-dependent choline dehydrogenase from Cronobacter sakazakii (strain ATCC BAA-894) (Enterobacter sakazakii).